We begin with the raw amino-acid sequence, 393 residues long: Polygalacturonase (393 aa).

An N-terminal signal peptide occupies residues 1–23 (MANRRSLFSLSLIFVFMINSAIA). PbH1 repeat units lie at residues 115-136 (VNGVTISGGILDGQGTALWACK), 178-204 (FQNVQMQGVRVSRSGNSPNTDGIHVQM), 205-226 (SSGVTILNSKIATGDDCVSIGP), 228-248 (TSNLWIEGVACGPGHGISIGS), 258-279 (VQNVTVKTVTFSGTQNGLRIKS), and 288-309 (ARNILFQHATMVNVENPIVIDQ). The active-site Proton donor is the Asp-219. A disulfide bridge connects residues Cys-221 and Cys-238. The active site involves His-242. Residue Asn-260 is glycosylated (N-linked (GlcNAc...) asparagine). 2 cysteine pairs are disulfide-bonded: Cys-349–Cys-355 and Cys-376–Cys-392.

Belongs to the glycosyl hydrolase 28 family.

The protein localises to the secreted. The protein resides in the cell wall. The catalysed reaction is (1,4-alpha-D-galacturonosyl)n+m + H2O = (1,4-alpha-D-galacturonosyl)n + (1,4-alpha-D-galacturonosyl)m.. Its function is as follows. Acts in concert with the pectinesterase, in the ripening process. Is involved in cell wall metabolism, specifically in polyuronide degradation. This is Polygalacturonase from Prunus persica (Peach).